We begin with the raw amino-acid sequence, 515 residues long: Methionine--tRNA ligase (515 aa).

The short motif at 13–23 (AYPNGKPHIGH) is the 'HIGH' region element. A 'KMSKS' region motif is present at residues 300–304 (KMSKS). Residue K303 coordinates ATP.

The protein belongs to the class-I aminoacyl-tRNA synthetase family. MetG type 2B subfamily. Monomer.

The protein resides in the cytoplasm. It catalyses the reaction tRNA(Met) + L-methionine + ATP = L-methionyl-tRNA(Met) + AMP + diphosphate. In terms of biological role, is required not only for elongation of protein synthesis but also for the initiation of all mRNA translation through initiator tRNA(fMet) aminoacylation. This chain is Methionine--tRNA ligase, found in Brucella suis biovar 1 (strain 1330).